Reading from the N-terminus, the 360-residue chain is Peptide chain release factor 1 (360 aa).

Gln237 carries the N5-methylglutamine modification.

Belongs to the prokaryotic/mitochondrial release factor family. Methylated by PrmC. Methylation increases the termination efficiency of RF1.

Its subcellular location is the cytoplasm. Functionally, peptide chain release factor 1 directs the termination of translation in response to the peptide chain termination codons UAG and UAA. The protein is Peptide chain release factor 1 of Azotobacter vinelandii (strain DJ / ATCC BAA-1303).